A 225-amino-acid polypeptide reads, in one-letter code: Protein E26 (225 aa).

In terms of assembly, interacts with proteins IE0 and IE1. Interacts with protein FP25K. Interacts with host importin alpha-16. Post-translationally, palmitoylated.

The protein localises to the host nucleus inner membrane. Its subcellular location is the virion. It is found in the host cytoplasm. It localises to the host nucleus. Its function is as follows. Plays a role in the sorting of ODV envelope proteins to the host inner nuclear membrane. May facilitate the fusion and release of nucleocapsids into the cytoplasm. Modulates the expression levels of IE0 and IE1. In Lepidoptera (butterflies and moths), this protein is Protein E26 (DA26).